The sequence spans 157 residues: 6,7-dimethyl-8-ribityllumazine synthase (157 aa).

Residues phenylalanine 22, 56 to 58, and 81 to 83 each bind 5-amino-6-(D-ribitylamino)uracil; these read AFE and VLI. 86–87 contacts (2S)-2-hydroxy-3-oxobutyl phosphate; sequence ET. Residue histidine 89 is the Proton donor of the active site. Residue phenylalanine 114 coordinates 5-amino-6-(D-ribitylamino)uracil. Arginine 128 is a binding site for (2S)-2-hydroxy-3-oxobutyl phosphate.

It belongs to the DMRL synthase family.

The enzyme catalyses (2S)-2-hydroxy-3-oxobutyl phosphate + 5-amino-6-(D-ribitylamino)uracil = 6,7-dimethyl-8-(1-D-ribityl)lumazine + phosphate + 2 H2O + H(+). It functions in the pathway cofactor biosynthesis; riboflavin biosynthesis; riboflavin from 2-hydroxy-3-oxobutyl phosphate and 5-amino-6-(D-ribitylamino)uracil: step 1/2. Its function is as follows. Catalyzes the formation of 6,7-dimethyl-8-ribityllumazine by condensation of 5-amino-6-(D-ribitylamino)uracil with 3,4-dihydroxy-2-butanone 4-phosphate. This is the penultimate step in the biosynthesis of riboflavin. The polypeptide is 6,7-dimethyl-8-ribityllumazine synthase (Chlamydia muridarum (strain MoPn / Nigg)).